The sequence spans 636 residues: Polyadenylate-binding protein 1 (636 aa).

Met-1 carries the N-acetylmethionine modification. RRM domains follow at residues 11–89, 99–175, 191–268, and 294–370; these read ASLY…WSQR, GNIF…RFKS, TNVY…RAQK, and VNLY…LAQR. Residues 166–289 are UNR-binding; sequence RKVFVGRFKS…FEQMKQDRIT (124 aa). Lys-299 is modified (N6-methyllysine). At Ser-315 the chain carries Phosphoserine. The residue at position 319 (Thr-319) is a Phosphothreonine. 4 positions are modified to omega-N-methylarginine: Arg-385, Arg-419, Arg-432, and Arg-436. Residues Arg-455 and Arg-460 each carry the omega-N-methylated arginine; by CARM1 modification. Arg-475 and Arg-481 each carry omega-N-methylarginine. Arg-493 carries the asymmetric dimethylarginine; alternate modification. Arg-493 is subject to Dimethylated arginine; alternate. Omega-N-methylarginine; alternate is present on Arg-493. Arg-506 carries the omega-N-methylarginine modification. Residue Lys-512 is modified to N6-acetyllysine. Arg-518 bears the Omega-N-methylarginine mark. In terms of domain architecture, PABC spans 542–619; the sequence is QEPLTASMLA…AVAVLQAHQA (78 aa).

The protein belongs to the polyadenylate-binding protein type-1 family. As to quaternary structure, may form homodimers. Component of a multisubunit autoregulatory ribonucleoprotein complex (ARC), at least composed of IGF2BP1, PABPC1 and CSDE1. Directly interacts with IGF2BP1. Part of a complex associated with the FOS mCRD domain and consisting of HNRPD, SYNCRIP, PAIP1 and CSDE1/UNR. Interacts with PAIP1 and PAIP2 (via the PABPC1-interacting motifs PAM1 and PAM2). Interacts with PAIP1 with a 1:1 stoichiometry and with PAIP2 with a 1:2 stoichiometry. The interaction with CSDE1 is direct and RNA-independent. Found in a mRNP complex with YBX2. Interacts with TENT2/GLD2. Identified in the spliceosome C complex. Identified in a mRNP complex, at least composed of DHX9, DDX3X, ELAVL1, HNRNPU, IGF2BP1, ILF3, PABPC1, PCBP2, PTBP2, STAU1, STAU2, SYNCRIP and YBX1. The interaction with DDX3X is direct and RNA-independent. This interaction increases in stressed cells and decreases during cell recovery. Identified in a IGF2BP1-dependent mRNP granule complex containing untranslated mRNAs. Interacts with NXF1/TAP. Interacts with PIWIL1. Interacts with AGO1, AGO2, GSPT1 and GSPT2. Interacts with LARP4B. Interacts (via the second and third RRM domains and the C-terminus) with PAIP2B (via central acidic portion and C-terminus). Forms a complex with LARP1 and SHFL. Interacts with LARP4. Interacts with ZFC3H1 in a RNase-sensitive manner. Interacts with TRIM71 (via NHL repeats) in an RNA-dependent manner. Interacts with TENT5C; the interaction has no effect on TENT5C poly(A) polymerase function. Interacts with G3BP1 and G3BP2. Interacts with ENDOV; the interaction is RNA-dependent and stimulates ENDOV activity. Interacts with UPF1; the interaction is RNA-dependent. Interacts with IGF2BP2 and IGF2BP3. May interact with SETX. Interacts with RBM46. Interacts with PAN3 isoform 1/Pan3L and isoform 3/Pan3S (via N-terminus); interaction with isoform 1 is less efficient than with isoform 3. Post-translationally, phosphorylated by MAPKAPK2. In terms of processing, methylated by CARM1. Arg-493 is dimethylated, probably to asymmetric dimethylarginine.

The protein resides in the cytoplasm. The protein localises to the stress granule. It localises to the nucleus. Its subcellular location is the cell projection. It is found in the lamellipodium. Its function is as follows. Binds the poly(A) tail of mRNA, including that of its own transcript, and regulates processes of mRNA metabolism such as pre-mRNA splicing and mRNA stability. Its function in translational initiation regulation can either be enhanced by PAIP1 or repressed by PAIP2. Can probably bind to cytoplasmic RNA sequences other than poly(A) in vivo. Binds to N6-methyladenosine (m6A)-containing mRNAs and contributes to MYC stability by binding to m6A-containing MYC mRNAs. Involved in translationally coupled mRNA turnover. Implicated with other RNA-binding proteins in the cytoplasmic deadenylation/translational and decay interplay of the FOS mRNA mediated by the major coding-region determinant of instability (mCRD) domain. Involved in regulation of nonsense-mediated decay (NMD) of mRNAs containing premature stop codons; for the recognition of premature termination codons (PTC) and initiation of NMD a competitive interaction between UPF1 and PABPC1 with the ribosome-bound release factors is proposed. By binding to long poly(A) tails, may protect them from uridylation by ZCCHC6/ZCCHC11 and hence contribute to mRNA stability. This is Polyadenylate-binding protein 1 (Pabpc1) from Rattus norvegicus (Rat).